The chain runs to 284 residues: Acetyl-coenzyme A carboxylase carboxyl transferase subunit beta (284 aa).

Positions 25-284 constitute a CoA carboxyltransferase N-terminal domain; sequence MWVKCPGCSA…ILGILYRPAA (260 aa). Zn(2+) is bound by residues C29, C32, C48, and C51. A C4-type zinc finger spans residues 29-51; that stretch reads CPGCSATLLAKDLDANLNVCPTC.

Belongs to the AccD/PCCB family. Acetyl-CoA carboxylase is a heterohexamer composed of biotin carboxyl carrier protein (AccB), biotin carboxylase (AccC) and two subunits each of ACCase subunit alpha (AccA) and ACCase subunit beta (AccD). Zn(2+) is required as a cofactor.

It is found in the cytoplasm. It catalyses the reaction N(6)-carboxybiotinyl-L-lysyl-[protein] + acetyl-CoA = N(6)-biotinyl-L-lysyl-[protein] + malonyl-CoA. The protein operates within lipid metabolism; malonyl-CoA biosynthesis; malonyl-CoA from acetyl-CoA: step 1/1. Functionally, component of the acetyl coenzyme A carboxylase (ACC) complex. Biotin carboxylase (BC) catalyzes the carboxylation of biotin on its carrier protein (BCCP) and then the CO(2) group is transferred by the transcarboxylase to acetyl-CoA to form malonyl-CoA. In Pelobacter propionicus (strain DSM 2379 / NBRC 103807 / OttBd1), this protein is Acetyl-coenzyme A carboxylase carboxyl transferase subunit beta.